The sequence spans 277 residues: Large ribosomal subunit protein uL2 (277 aa).

Residues 226–277 (NPIDHPHGGGEGRTSGGRHPVTPWGKPTKGKKTRSNKSTNKFILISRHKRKK) form a disordered region.

It belongs to the universal ribosomal protein uL2 family. Part of the 50S ribosomal subunit. Forms a bridge to the 30S subunit in the 70S ribosome.

One of the primary rRNA binding proteins. Required for association of the 30S and 50S subunits to form the 70S ribosome, for tRNA binding and peptide bond formation. It has been suggested to have peptidyltransferase activity; this is somewhat controversial. Makes several contacts with the 16S rRNA in the 70S ribosome. In Rhodopseudomonas palustris (strain BisA53), this protein is Large ribosomal subunit protein uL2.